The primary structure comprises 242 residues: ATP-dependent dethiobiotin synthetase BioD (242 aa).

An ATP-binding site is contributed by 12–17; that stretch reads SVGKTI. Thr-16 is a Mg(2+) binding site. Lys-37 is a catalytic residue. Residue Asp-66 coordinates ATP. Positions 66 and 124 each coordinate Mg(2+). 184–185 provides a ligand contact to ATP; it reads NR.

It belongs to the dethiobiotin synthetase family. As to quaternary structure, homodimer. Mg(2+) is required as a cofactor.

It is found in the cytoplasm. It carries out the reaction (7R,8S)-7,8-diammoniononanoate + CO2 + ATP = (4R,5S)-dethiobiotin + ADP + phosphate + 3 H(+). Its pathway is cofactor biosynthesis; biotin biosynthesis; biotin from 7,8-diaminononanoate: step 1/2. Its function is as follows. Catalyzes a mechanistically unusual reaction, the ATP-dependent insertion of CO2 between the N7 and N8 nitrogen atoms of 7,8-diaminopelargonic acid (DAPA, also called 7,8-diammoniononanoate) to form a ureido ring. The polypeptide is ATP-dependent dethiobiotin synthetase BioD (Mannheimia succiniciproducens (strain KCTC 0769BP / MBEL55E)).